Here is a 156-residue protein sequence, read N- to C-terminus: Endogenous retrovirus group K member 10 Pro protein (156 aa).

The region spanning 21-96 is the Peptidase A2 domain; it reads FEGLVDTGAD…IPLNLWGRDL (76 aa). Asp26 is a catalytic residue. Positions 111–156 constitute a G-patch domain; sequence YSPTSQKIMTKMGYIPGKGLGKNEDGIKVPVEAKINQEREGIGYPF.

This sequence belongs to the peptidase A2 family. HERV class-II K(HML-2) subfamily. Active as a homodimer. In terms of processing, autoproteolytically processed at the N-terminus. Expected C-terminal autoprocessing not detected. The sequence shown is that of the processed Pro protein.

The catalysed reaction is Processing at the authentic HIV-1 PR recognition site and release of the mature p17 matrix and the p24 capsid protein, as a result of the cleavage of the -SQNY-|-PIVQ- cleavage site.. Resistant to a number of clinically useful HIV-1 PR inhibitors. Inhibited by cyclic urea SD146. Functionally, retroviral proteases have roles in processing of the primary translation products and the maturation of the viral particle. Endogenous Pro proteins may have kept, lost or modified their original function during evolution. This endogenous protein has retained most of the characteristics of retroviral proteases. The polypeptide is Endogenous retrovirus group K member 10 Pro protein (ERVK-10) (Homo sapiens (Human)).